The chain runs to 146 residues: Catabolic 3-dehydroquinase (146 aa).

Tyr24 functions as the Proton acceptor in the catalytic mechanism. Residues Asn78, His84, and Asp91 each contribute to the substrate site. The Proton donor role is filled by His104. Residues 105 to 106 (IT) and Arg115 contribute to the substrate site.

Belongs to the type-II 3-dehydroquinase family. Homododecamer. Adopts a ring-like structure, composed of an arrangement of two hexameric rings stacked on top of one another.

The enzyme catalyses 3-dehydroquinate = 3-dehydroshikimate + H2O. It participates in aromatic compound metabolism; 3,4-dihydroxybenzoate biosynthesis; 3,4-dihydroxybenzoate from 3-dehydroquinate: step 1/2. Its function is as follows. Is involved in the catabolism of quinate. Allows the utilization of quinate as carbon source via the beta-ketoadipate pathway. This Scheffersomyces stipitis (strain ATCC 58785 / CBS 6054 / NBRC 10063 / NRRL Y-11545) (Yeast) protein is Catabolic 3-dehydroquinase.